Here is a 206-residue protein sequence, read N- to C-terminus: Large ribosomal subunit protein uL4 (206 aa).

Residues 43–78 (NQRQGTHDTKTRAEVRGGGRKPWRQKGTGRARAGSS) are disordered. The span at 47–59 (GTHDTKTRAEVRG) shows a compositional bias: basic and acidic residues. Basic residues predominate over residues 60 to 71 (GGRKPWRQKGTG).

Belongs to the universal ribosomal protein uL4 family. Part of the 50S ribosomal subunit.

In terms of biological role, one of the primary rRNA binding proteins, this protein initially binds near the 5'-end of the 23S rRNA. It is important during the early stages of 50S assembly. It makes multiple contacts with different domains of the 23S rRNA in the assembled 50S subunit and ribosome. Forms part of the polypeptide exit tunnel. This is Large ribosomal subunit protein uL4 from Desulforamulus reducens (strain ATCC BAA-1160 / DSM 100696 / MI-1) (Desulfotomaculum reducens).